We begin with the raw amino-acid sequence, 626 residues long: Chaperone protein HtpG (626 aa).

Residues 1-339 (MSTNQETRGF…SNDLPLNVSR (339 aa)) are a; substrate-binding. The b stretch occupies residues 340-555 (EILQDNKVTA…NDQMTTQMAK (216 aa)). A c region spans residues 556–626 (LFAAAGQPVP…FIKRVNSLLS (71 aa)).

This sequence belongs to the heat shock protein 90 family. As to quaternary structure, homodimer.

The protein localises to the cytoplasm. In terms of biological role, molecular chaperone. Has ATPase activity. This chain is Chaperone protein HtpG, found in Histophilus somni (strain 129Pt) (Haemophilus somnus).